Here is a 112-residue protein sequence, read N- to C-terminus: Integration host factor subunit alpha (112 aa).

Belongs to the bacterial histone-like protein family. In terms of assembly, heterodimer of an alpha and a beta chain.

Its function is as follows. This protein is one of the two subunits of integration host factor, a specific DNA-binding protein that functions in genetic recombination as well as in transcriptional and translational control. The chain is Integration host factor subunit alpha from Rhizobium etli (strain CIAT 652).